Reading from the N-terminus, the 338-residue chain is Putative clathrin assembly protein At5g10410 (338 aa).

One can recognise an ENTH domain in the interval Phe-27 to Pro-157.

It is found in the membrane. The protein localises to the clathrin-coated pit. It localises to the golgi apparatus. Its subcellular location is the cytoplasmic vesicle. The protein resides in the clathrin-coated vesicle. The protein is Putative clathrin assembly protein At5g10410 of Arabidopsis thaliana (Mouse-ear cress).